Reading from the N-terminus, the 1321-residue chain is C-Jun-amino-terminal kinase-interacting protein 4 (1321 aa).

The residue at position 1 (M1) is an N-acetylmethionine. The RH1 domain maps to 7-95 (VVYQEEPGGS…ITQYEREKAL (89 aa)). Residues 66-166 (AQDQEHQVEL…NALHQRHTEM (101 aa)) are a coiled coil. 5 positions are modified to phosphoserine: S109, S183, S185, S194, and S203. Positions 203–308 (SLGIFPLPAG…EGFVKGTDTS (106 aa)) are disordered. The residue at position 217 (T217) is a Phosphothreonine. Residues 236–248 (ELSQPRSHTSLKV) show a composition bias toward polar residues. S238, S251, S265, S268, and S272 each carry phosphoserine. The span at 266–285 (DISQGGSKATTPASTANSDV) shows a compositional bias: polar residues. T292 is subject to Phosphothreonine. Phosphoserine is present on residues S311, S329, S332, and S347. The segment covering 322 to 332 (AQETRNVSTES) has biased composition (polar residues). The segment at 322-341 (AQETRNVSTESGENEEKSEV) is disordered. Phosphothreonine occurs at positions 348, 365, and 418. A coiled-coil region spans residues 408–534 (REVENLILEN…LQEAVRWTEM (127 aa)). The span at 473–489 (LRKARAEAEDARQKAKD) shows a compositional bias: basic and acidic residues. 2 disordered regions span residues 473–500 (LRKARAEAEDARQKAKDDDDSDIPTAQR) and 563–600 (SSNATKKPEPPVNLKYNAPTSHVTPSVKKRSSTLSQLP). The 105-residue stretch at 500 to 604 (RKRFTRVEMA…TLSQLPGDKS (105 aa)) folds into the RH2 domain. T586 is modified (phosphothreonine). S588 is subject to Phosphoserine. A Phosphothreonine modification is found at T595. 5 positions are modified to phosphoserine: S705, S728, S730, S732, and S733. Residues 724 to 758 (SKQRSASQSSLDKLDQELKEQQKEFKNQEELSSQV) adopt a coiled-coil conformation. Positions 853-883 (TGAATSPSTNGASPVIEKPPEMETENSEVDE) are disordered. The span at 855-864 (AATSPSTNGA) shows a compositional bias: polar residues. Acidic residues predominate over residues 874 to 883 (METENSEVDE). At S1188 the chain carries Phosphoserine. The segment at 1239 to 1267 (PQSSSGGADLTADKAGSSAQEPSSQTPLK) is disordered. Polar residues predominate over residues 1255–1266 (SSAQEPSSQTPL). T1264 is modified (phosphothreonine).

This sequence belongs to the JIP scaffold family. Homodimer. The homodimer interacts with ARF6, forming a heterotetramer. Homooligomer. Interacts with MAX, MAPK8, MAPK14, MAP3K3, MYC, and MAP2K4. Interacts with KNS2. Interaction with KNS2 is important in the formation of ternary complex with MAPK8. Interacts with PIP4P1. Interacts with PIKFYVE. Phosphorylated by MAPK8 and MAPK14. In terms of tissue distribution, highly expressed in brain, kidney, liver, heart.

It is found in the cytoplasm. The protein localises to the perinuclear region. Its subcellular location is the lysosome membrane. In terms of biological role, the JNK-interacting protein (JIP) group of scaffold proteins selectively mediates JNK signaling by aggregating specific components of the MAPK cascade to form a functional JNK signaling module. Regulates lysosomal positioning by acting as an adapter protein which links PIP4P1-positive lysosomes to the dynein-dynactin complex. Assists PIKFYVE selective functionality in microtubule-based endosome-to-TGN trafficking. The sequence is that of C-Jun-amino-terminal kinase-interacting protein 4 from Mus musculus (Mouse).